A 376-amino-acid polypeptide reads, in one-letter code: Probable dual-specificity RNA methyltransferase RlmN (376 aa).

Residue Glu-96 is the Proton acceptor of the active site. Residues 102–346 form the Radical SAM core domain; the sequence is YPDRSTVCVS…CTVRVERGVE (245 aa). Cys-109 and Cys-351 are disulfide-bonded. [4Fe-4S] cluster-binding residues include Cys-116, Cys-120, and Cys-123. S-adenosyl-L-methionine is bound by residues 171–172, Ser-203, 226–228, and Asn-308; these read GE and SLH. The S-methylcysteine intermediate role is filled by Cys-351.

Belongs to the radical SAM superfamily. RlmN family. The cofactor is [4Fe-4S] cluster.

It is found in the cytoplasm. It carries out the reaction adenosine(2503) in 23S rRNA + 2 reduced [2Fe-2S]-[ferredoxin] + 2 S-adenosyl-L-methionine = 2-methyladenosine(2503) in 23S rRNA + 5'-deoxyadenosine + L-methionine + 2 oxidized [2Fe-2S]-[ferredoxin] + S-adenosyl-L-homocysteine. The catalysed reaction is adenosine(37) in tRNA + 2 reduced [2Fe-2S]-[ferredoxin] + 2 S-adenosyl-L-methionine = 2-methyladenosine(37) in tRNA + 5'-deoxyadenosine + L-methionine + 2 oxidized [2Fe-2S]-[ferredoxin] + S-adenosyl-L-homocysteine. Its function is as follows. Specifically methylates position 2 of adenine 2503 in 23S rRNA and position 2 of adenine 37 in tRNAs. The polypeptide is Probable dual-specificity RNA methyltransferase RlmN (Chloroflexus aurantiacus (strain ATCC 29366 / DSM 635 / J-10-fl)).